The sequence spans 211 residues: Methylthioribulose-1-phosphate dehydratase (211 aa).

Positions 94 and 96 each coordinate Zn(2+).

This sequence belongs to the aldolase class II family. MtnB subfamily. The cofactor is Zn(2+).

The enzyme catalyses 5-(methylsulfanyl)-D-ribulose 1-phosphate = 5-methylsulfanyl-2,3-dioxopentyl phosphate + H2O. The protein operates within amino-acid biosynthesis; L-methionine biosynthesis via salvage pathway; L-methionine from S-methyl-5-thio-alpha-D-ribose 1-phosphate: step 2/6. In terms of biological role, catalyzes the dehydration of methylthioribulose-1-phosphate (MTRu-1-P) into 2,3-diketo-5-methylthiopentyl-1-phosphate (DK-MTP-1-P). The polypeptide is Methylthioribulose-1-phosphate dehydratase (Pseudoalteromonas translucida (strain TAC 125)).